Reading from the N-terminus, the 499-residue chain is Cysteine--tRNA ligase (499 aa).

Cys-29 is a Zn(2+) binding site. A 'HIGH' region motif is present at residues Val-31–His-41. Cys-213, His-238, and Glu-242 together coordinate Zn(2+). The short motif at Lys-270–Ser-274 is the 'KMSKS' region element. Lys-273 contributes to the ATP binding site.

Belongs to the class-I aminoacyl-tRNA synthetase family. In terms of assembly, monomer. The cofactor is Zn(2+).

The protein localises to the cytoplasm. The enzyme catalyses tRNA(Cys) + L-cysteine + ATP = L-cysteinyl-tRNA(Cys) + AMP + diphosphate. This is Cysteine--tRNA ligase from Synechococcus sp. (strain CC9902).